The primary structure comprises 286 residues: Polyamine aminopropyltransferase 1 (286 aa).

Residues 1–235 (MSDYQETLYQ…GAMTFAWGST (235 aa)) enclose the PABS domain. Q30 contributes to the S-methyl-5'-thioadenosine binding site. Spermidine is bound by residues H61 and D85. S-methyl-5'-thioadenosine is bound by residues E105 and 137–138 (DG). D155 functions as the Proton acceptor in the catalytic mechanism. Position 155 to 158 (155 to 158 (DSTD)) interacts with spermidine. Position 162 (P162) interacts with S-methyl-5'-thioadenosine.

The protein belongs to the spermidine/spermine synthase family. In terms of assembly, homodimer or homotetramer.

Its subcellular location is the cytoplasm. The catalysed reaction is S-adenosyl 3-(methylsulfanyl)propylamine + putrescine = S-methyl-5'-thioadenosine + spermidine + H(+). Its pathway is amine and polyamine biosynthesis; spermidine biosynthesis; spermidine from putrescine: step 1/1. Functionally, catalyzes the irreversible transfer of a propylamine group from the amino donor S-adenosylmethioninamine (decarboxy-AdoMet) to putrescine (1,4-diaminobutane) to yield spermidine. The chain is Polyamine aminopropyltransferase 1 from Pseudomonas aeruginosa (strain ATCC 15692 / DSM 22644 / CIP 104116 / JCM 14847 / LMG 12228 / 1C / PRS 101 / PAO1).